The sequence spans 557 residues: Jerky protein (557 aa).

The HTH psq-type domain occupies 11–62; that stretch reads KGEKRKRVVLTLKEKIDICTRLERGESRKALMQEYNVGMSTLYDIKAHKAQL. DNA-binding regions (H-T-H motif) lie at residues 38–58 and 110–142; these read RKALMQEYNVGMSTLYDIKAH and PMLIEKAKDFYKQMRLTEPCVFSGGWLWRFKAR. One can recognise an HTH CENPB-type domain in the interval 77–149; sequence QRRTLHTPKL…KARHGIKKLD (73 aa). The DDE-1 domain maps to 213-382; that stretch reads KDRLTVLMCA…VPSQVFQRAW (170 aa).

This sequence belongs to the tigger transposable element derived protein family. In terms of tissue distribution, brain; highest in the temporal and brainstem regions.

It is found in the nucleus. In terms of biological role, may bind DNA. This chain is Jerky protein, found in Mus musculus (Mouse).